Reading from the N-terminus, the 184-residue chain is Protein DMP2 (184 aa).

The next 4 helical transmembrane spans lie at 19–39 (LIKL…PVLT), 45–65 (LLIN…SCCF), 105–125 (VGDF…SLLD), and 142–162 (IFLM…FTVF).

Belongs to the plant DMP1 protein family. In terms of tissue distribution, expressed constitutively in leaves, stems, flowers, siliques and roots.

It localises to the endoplasmic reticulum membrane. It is found in the vacuole membrane. Functionally, involved in membrane remodeling. This is Protein DMP2 from Arabidopsis thaliana (Mouse-ear cress).